The following is a 598-amino-acid chain: Autophagy-related protein 22-1 (598 aa).

Positions 1–20 (MEDGGAGLRAPRYPAEDTSP) are disordered. A helical membrane pass occupies residues 28 to 48 (GFFCYGLAAEVFAVCAVGSFL). N-linked (GlcNAc...) asparagine glycosylation is found at Asn74 and Asn80. Helical transmembrane passes span 111–131 (SFAM…LVSV), 159–179 (FLLV…ICVV), and 182–202 (GCSF…HPVV). The disordered stretch occupies residues 207–238 (DHPTASSSIPLQPISPQRSSRKSEESLHQVNR). Low complexity predominate over residues 212–224 (SSSIPLQPISPQR). The segment covering 227–238 (RKSEESLHQVNR) has biased composition (basic and acidic residues). The chain crosses the membrane as a helical span at residues 263-283 (VGIGYMAAVSVQVICILILYI). An N-linked (GlcNAc...) asparagine glycan is attached at Asn285. 7 helical membrane-spanning segments follow: residues 297–317 (TVLF…VMWL), 363–383 (VLLF…ISAT), 400–420 (ALLS…WPII), 431–451 (IIVC…LGFL), 465–485 (WYEI…LSSY), 489–509 (FYGL…FAIT), and 534–554 (AFGF…MVDV). The disordered stretch occupies residues 575–598 (HEDFESFEGSSDGHEAEGLMRDHD). Residues 585 to 598 (SDGHEAEGLMRDHD) are compositionally biased toward basic and acidic residues.

The protein belongs to the ATG22 family.

The protein localises to the vacuole membrane. Functionally, vacuolar effluxer which mediate the efflux of amino acids resulting from autophagic degradation. The release of autophagic amino acids allows the maintenance of protein synthesis and viability during nitrogen starvation. The sequence is that of Autophagy-related protein 22-1 (atg22-1) from Sclerotinia sclerotiorum (strain ATCC 18683 / 1980 / Ss-1) (White mold).